A 504-amino-acid chain; its full sequence is Probable periplasmic serine endoprotease DegP-like (504 aa).

Residues 1–26 (MLKTTTVAGLAAVLLTTGLPAEVAQS) form the signal peptide. Basic and acidic residues predominate over residues 102–118 (RADRWRDRRGPRGEGRL). The interval 102-122 (RADRWRDRRGPRGEGRLRPRA) is disordered. Residues 113–286 (RGEGRLRPRA…PASVAKDVVD (174 aa)) are serine protease. Residues histidine 140, aspartate 170, and serine 244 each act as charge relay system in the active site. Substrate contacts are provided by residues 242–244 (GNS) and 299–303 (LGVQI). 2 PDZ domains span residues 287 to 378 (SLIK…LWRS) and 401 to 491 (ATGE…IEAQ). Disordered stretches follow at residues 389 to 411 (GTLPSDAKEPAPATGEAQPDEGQ) and 428 to 447 (EDGKGVTIASVDPDSDAGDR).

It belongs to the peptidase S1C family.

It localises to the periplasm. The enzyme catalyses Acts on substrates that are at least partially unfolded. The cleavage site P1 residue is normally between a pair of hydrophobic residues, such as Val-|-Val.. Functionally, might be efficient in the degradation of transiently denatured and unfolded proteins which accumulate in the periplasm following stress conditions. In Rhizobium meliloti (strain 1021) (Ensifer meliloti), this protein is Probable periplasmic serine endoprotease DegP-like (degP1).